The chain runs to 183 residues: SsrA-binding protein (183 aa).

The segment at 1–27 (MAKKATLVDHGAAKGKKKAQSKVSKKN) is disordered. Residues 13-27 (AKGKKKAQSKVSKKN) show a composition bias toward basic residues.

This sequence belongs to the SmpB family.

The protein resides in the cytoplasm. In terms of biological role, required for rescue of stalled ribosomes mediated by trans-translation. Binds to transfer-messenger RNA (tmRNA), required for stable association of tmRNA with ribosomes. tmRNA and SmpB together mimic tRNA shape, replacing the anticodon stem-loop with SmpB. tmRNA is encoded by the ssrA gene; the 2 termini fold to resemble tRNA(Ala) and it encodes a 'tag peptide', a short internal open reading frame. During trans-translation Ala-aminoacylated tmRNA acts like a tRNA, entering the A-site of stalled ribosomes, displacing the stalled mRNA. The ribosome then switches to translate the ORF on the tmRNA; the nascent peptide is terminated with the 'tag peptide' encoded by the tmRNA and targeted for degradation. The ribosome is freed to recommence translation, which seems to be the essential function of trans-translation. The sequence is that of SsrA-binding protein from Corynebacterium kroppenstedtii (strain DSM 44385 / JCM 11950 / CIP 105744 / CCUG 35717).